Here is a 201-residue protein sequence, read N- to C-terminus: dITP/XTP pyrophosphatase (201 aa).

8 to 13 serves as a coordination point for substrate; it reads SNNPGK. Positions 40 and 69 each coordinate Mg(2+). Asp-69 (proton acceptor) is an active-site residue. Substrate is bound by residues Ser-70, 155–158, Lys-178, and 183–184; these read FGYD and HR.

It belongs to the HAM1 NTPase family. As to quaternary structure, homodimer. Mg(2+) is required as a cofactor.

It catalyses the reaction XTP + H2O = XMP + diphosphate + H(+). The catalysed reaction is dITP + H2O = dIMP + diphosphate + H(+). The enzyme catalyses ITP + H2O = IMP + diphosphate + H(+). Functionally, pyrophosphatase that catalyzes the hydrolysis of nucleoside triphosphates to their monophosphate derivatives, with a high preference for the non-canonical purine nucleotides XTP (xanthosine triphosphate), dITP (deoxyinosine triphosphate) and ITP. Seems to function as a house-cleaning enzyme that removes non-canonical purine nucleotides from the nucleotide pool, thus preventing their incorporation into DNA/RNA and avoiding chromosomal lesions. This chain is dITP/XTP pyrophosphatase, found in Ralstonia nicotianae (strain ATCC BAA-1114 / GMI1000) (Ralstonia solanacearum).